The following is a 190-amino-acid chain: Hypoxanthine/guanine phosphoribosyltransferase (190 aa).

Belongs to the purine/pyrimidine phosphoribosyltransferase family. Archaeal HPRT subfamily. In terms of assembly, homodimer.

Its subcellular location is the cytoplasm. The enzyme catalyses IMP + diphosphate = hypoxanthine + 5-phospho-alpha-D-ribose 1-diphosphate. It catalyses the reaction GMP + diphosphate = guanine + 5-phospho-alpha-D-ribose 1-diphosphate. It functions in the pathway purine metabolism; IMP biosynthesis via salvage pathway; IMP from hypoxanthine: step 1/1. Functionally, catalyzes a salvage reaction resulting in the formation of IMP that is energically less costly than de novo synthesis. This Methanobacterium paludis (strain DSM 25820 / JCM 18151 / SWAN1) protein is Hypoxanthine/guanine phosphoribosyltransferase.